The primary structure comprises 321 residues: CRISPR system ring nuclease SSO1393 (321 aa).

The protein belongs to the cOA ring nuclease family. In terms of assembly, homodimer. Does not require a metal cofactor. is required as a cofactor.

The protein resides in the cytoplasm. The enzyme catalyses cyclic tetraadenylate = 2 5'-hydroxy-diadenylate 2',3'-cylic phosphate. In terms of biological role, CRISPR (clustered regularly interspaced short palindromic repeat) is an adaptive immune system that provides protection against mobile genetic elements (viruses, transposable elements and conjugative plasmids). CRISPR clusters contain spacers, sequences complementary to antecedent mobile elements, and target invading nucleic acids. CRISPR clusters are transcribed and processed into CRISPR RNA (crRNA). A nuclease that degrades cyclic oligoadenylates (cOA), second messengers that induce an antiviral state important for defense against invading nucleic acids. Destruction of cOA deactivates the Csx1 ribonuclease, preventing uncontrolled degradation of cellular RNA. Slowly degrades cA4 (a tetraadenylate ring) into first a linear tetraadenylate product and secondly into a linear diadenylate product with 5'-OH and 2',3'-cyclic phosphate termini. Is 10-fold less active than SSO2081, suggesting it plays a minor role in cA4 degradation. There may be 2 active sites per homodimer. The polypeptide is CRISPR system ring nuclease SSO1393 (Saccharolobus solfataricus (strain ATCC 35092 / DSM 1617 / JCM 11322 / P2) (Sulfolobus solfataricus)).